The chain runs to 43 residues: Cytochrome b559 subunit beta (43 aa).

A helical transmembrane segment spans residues 18–34 (WLAIHGLAIPTVFFLGG). Heme is bound at residue H22.

This sequence belongs to the PsbE/PsbF family. Heterodimer of an alpha subunit and a beta subunit. PSII is composed of 1 copy each of membrane proteins PsbA, PsbB, PsbC, PsbD, PsbE, PsbF, PsbH, PsbI, PsbJ, PsbK, PsbL, PsbM, PsbT, PsbX, PsbY, PsbZ, Psb30/Ycf12, at least 3 peripheral proteins of the oxygen-evolving complex and a large number of cofactors. It forms dimeric complexes. Heme b is required as a cofactor.

It is found in the plastid. It localises to the chloroplast thylakoid membrane. Functionally, this b-type cytochrome is tightly associated with the reaction center of photosystem II (PSII). PSII is a light-driven water:plastoquinone oxidoreductase that uses light energy to abstract electrons from H(2)O, generating O(2) and a proton gradient subsequently used for ATP formation. It consists of a core antenna complex that captures photons, and an electron transfer chain that converts photonic excitation into a charge separation. The polypeptide is Cytochrome b559 subunit beta (Phaeodactylum tricornutum (strain CCAP 1055/1)).